A 914-amino-acid chain; its full sequence is Sensor protein TorS (914 aa).

Residues 1–8 (MNLTLTRR) lie on the Cytoplasmic side of the membrane. Residues 9–29 (LWMGFALMALLTLTSTLVGWY) traverse the membrane as a helical segment. Residues 30 to 332 (NLRFISQVEK…EKASARGQYS (303 aa)) lie on the Periplasmic side of the membrane. The chain crosses the membrane as a helical span at residues 333–353 (LLLLGMVSLCALILILWRVVY). Residues 354 to 407 (RSVTRPLAEQTQALQRLLDGDIDSPFPETAGVRELDTIGRLMDAFRSNVHALNR) enclose the HAMP domain. Over 354–914 (RSVTRPLAEQ…WLHKKDLNAI (561 aa)) the chain is Cytoplasmic. A Histidine kinase domain is found at 450–664 (AMSHEIRTPL…CFCLRLPLRV (215 aa)). H453 carries the post-translational modification Phosphohistidine; by autocatalysis. The Response regulatory domain occupies 683-798 (RLLLIEDNPL…VLGQLLAHYL (116 aa)). A 4-aspartylphosphate modification is found at D733. Residues 821–914 (GTEKIHEWLV…WLHKKDLNAI (94 aa)) form the HPt domain. H860 bears the Phosphohistidine mark.

May form homomultimers. Seems to interact with TorT and TorC apocytochrome. Activation requires a sequential transfer of a phosphate group from a His in the primary transmitter domain, to an Asp in the receiver domain and to a His in the secondary transmitter domain.

It is found in the cell inner membrane. The catalysed reaction is ATP + protein L-histidine = ADP + protein N-phospho-L-histidine.. Inhibited by TorC apocytochrome. Functionally, member of the two-component regulatory system TorS/TorR involved in the anaerobic utilization of trimethylamine-N-oxide (TMAO). Detects the presence of TMAO in the medium and, in response, activates TorR via a four-step phosphorelay. When TMAO is removed, TorS can dephosphorylate TorR, probably by a reverse phosphorelay involving His-860 and Asp-733. The protein is Sensor protein TorS (torS) of Escherichia coli (strain K12).